A 227-amino-acid polypeptide reads, in one-letter code: Cytidylate kinase (227 aa).

12-20 (GPGGAGKGT) contributes to the ATP binding site.

Belongs to the cytidylate kinase family. Type 1 subfamily.

The protein resides in the cytoplasm. The catalysed reaction is CMP + ATP = CDP + ADP. It catalyses the reaction dCMP + ATP = dCDP + ADP. The polypeptide is Cytidylate kinase (Klebsiella pneumoniae (strain 342)).